The primary structure comprises 326 residues: Pancreas transcription factor 1 subunit alpha (326 aa).

The bHLH domain occupies 162-214 (QLRQAANVRERRRMQSINDAFEGLRSHIPTLPYEKRLSKVDTLRLAIGYINFL). Over residues 229–240 (TGGCGGPGGSRH) the composition is skewed to gly residues. Disordered stretches follow at residues 229–249 (TGGC…PGNQ) and 304–326 (DPRK…EFVS).

Component of the pancreas transcription factor 1 complex (PTF1) which is composed of TCF3/p75, TCF12/p64 and PTF1A/p48. TCF3 is responsible for the nuclear import of the p48/p64 complex. Interacts with TCF3 and RBPSUH/RBP-Jkappa. In terms of tissue distribution, exocrine pancreas-specific. Expressed in azaserine-induced pancreatic tumors (at protein level). Expressed in AR42J cells but not in ARIP, DSL6A, or DSL6B cells. Down-regulation is associated with the change of an azaserine-induced acinar cell carcinoma to a ductal phenotype.

Its subcellular location is the nucleus. It localises to the cytoplasm. Transcription factor implicated in the cell fate determination in various organs. Binds to the E-box consensus sequence 5'-CANNTG-3'. Plays a role in early and late pancreas development and differentiation. Important for determining whether cells allocated to the pancreatic buds continue towards pancreatic organogenesis or revert back to duodenal fates. May be involved in the maintenance of exocrine pancreas-specific gene expression including ELA1 and amylase. Required for the formation of pancreatic acinar and ductal cells. Plays an important role in cerebellar development. Directly regulated by FOXN4 and RORC during retinal development, FOXN4-PTF1A pathway plays a central role in directing the differentiation of retinal progenitors towards horizontal and amacrine fates. The sequence is that of Pancreas transcription factor 1 subunit alpha (Ptf1a) from Rattus norvegicus (Rat).